A 568-amino-acid polypeptide reads, in one-letter code: Glucose-6-phosphate isomerase, cytosolic 1 (568 aa).

The active-site Proton donor is the E360. Residues H391 and K516 contribute to the active site.

It belongs to the GPI family. In terms of assembly, homodimer.

The protein resides in the cytoplasm. It carries out the reaction alpha-D-glucose 6-phosphate = beta-D-fructose 6-phosphate. It participates in carbohydrate degradation; glycolysis; D-glyceraldehyde 3-phosphate and glycerone phosphate from D-glucose: step 2/4. This chain is Glucose-6-phosphate isomerase, cytosolic 1 (PGIC1), found in Clarkia xantiana (Gunsight clarkia).